The primary structure comprises 296 residues: Ribosomal RNA small subunit methyltransferase J (296 aa).

Position 205 (D205) interacts with S-adenosyl-L-methionine.

This sequence belongs to the methyltransferase superfamily. RsmJ family.

The protein resides in the cytoplasm. It catalyses the reaction guanosine(1516) in 16S rRNA + S-adenosyl-L-methionine = N(2)-methylguanosine(1516) in 16S rRNA + S-adenosyl-L-homocysteine + H(+). Functionally, specifically methylates the guanosine in position 1516 of 16S rRNA. The sequence is that of Ribosomal RNA small subunit methyltransferase J from Psychrobacter arcticus (strain DSM 17307 / VKM B-2377 / 273-4).